We begin with the raw amino-acid sequence, 93 residues long: Small ribosomal subunit protein uS15 (93 aa).

It belongs to the universal ribosomal protein uS15 family. As to quaternary structure, part of the 30S ribosomal subunit. Forms a bridge to the 50S subunit in the 70S ribosome, contacting the 23S rRNA.

One of the primary rRNA binding proteins, it binds directly to 16S rRNA where it helps nucleate assembly of the platform of the 30S subunit by binding and bridging several RNA helices of the 16S rRNA. In terms of biological role, forms an intersubunit bridge (bridge B4) with the 23S rRNA of the 50S subunit in the ribosome. In Anaplasma marginale (strain Florida), this protein is Small ribosomal subunit protein uS15.